An 82-amino-acid polypeptide reads, in one-letter code: Sec-independent protein translocase protein TatA (82 aa).

Residues 1-21 (MGSFSIWHWLIVLLIVVMVFG) form a helical membrane-spanning segment. Residues 46–82 (GASTDDSATTSAPAGQVTNNSAAADKTTIDVEAKHKS) are disordered. A compositionally biased stretch (polar residues) spans 49–67 (TDDSATTSAPAGQVTNNSA). Residues 72–82 (TTIDVEAKHKS) are compositionally biased toward basic and acidic residues.

Belongs to the TatA/E family. As to quaternary structure, the Tat system comprises two distinct complexes: a TatABC complex, containing multiple copies of TatA, TatB and TatC subunits, and a separate TatA complex, containing only TatA subunits. Substrates initially bind to the TatABC complex, which probably triggers association of the separate TatA complex to form the active translocon.

The protein localises to the cell inner membrane. Functionally, part of the twin-arginine translocation (Tat) system that transports large folded proteins containing a characteristic twin-arginine motif in their signal peptide across membranes. TatA could form the protein-conducting channel of the Tat system. The sequence is that of Sec-independent protein translocase protein TatA from Acidovorax ebreus (strain TPSY) (Diaphorobacter sp. (strain TPSY)).